Consider the following 228-residue polypeptide: Phosphoribosylformylglycinamidine synthase subunit PurQ (228 aa).

The region spanning phenylalanine 3 to valine 226 is the Glutamine amidotransferase type-1 domain. Residue cysteine 86 is the Nucleophile of the active site. Catalysis depends on residues histidine 195 and glutamate 197.

As to quaternary structure, part of the FGAM synthase complex composed of 1 PurL, 1 PurQ and 2 PurS subunits.

Its subcellular location is the cytoplasm. It carries out the reaction N(2)-formyl-N(1)-(5-phospho-beta-D-ribosyl)glycinamide + L-glutamine + ATP + H2O = 2-formamido-N(1)-(5-O-phospho-beta-D-ribosyl)acetamidine + L-glutamate + ADP + phosphate + H(+). It catalyses the reaction L-glutamine + H2O = L-glutamate + NH4(+). It participates in purine metabolism; IMP biosynthesis via de novo pathway; 5-amino-1-(5-phospho-D-ribosyl)imidazole from N(2)-formyl-N(1)-(5-phospho-D-ribosyl)glycinamide: step 1/2. Part of the phosphoribosylformylglycinamidine synthase complex involved in the purines biosynthetic pathway. Catalyzes the ATP-dependent conversion of formylglycinamide ribonucleotide (FGAR) and glutamine to yield formylglycinamidine ribonucleotide (FGAM) and glutamate. The FGAM synthase complex is composed of three subunits. PurQ produces an ammonia molecule by converting glutamine to glutamate. PurL transfers the ammonia molecule to FGAR to form FGAM in an ATP-dependent manner. PurS interacts with PurQ and PurL and is thought to assist in the transfer of the ammonia molecule from PurQ to PurL. The protein is Phosphoribosylformylglycinamidine synthase subunit PurQ of Geobacillus thermodenitrificans (strain NG80-2).